The primary structure comprises 229 residues: UPF0173 metal-dependent hydrolase SH1218 (229 aa).

It belongs to the UPF0173 family.

This is UPF0173 metal-dependent hydrolase SH1218 from Staphylococcus haemolyticus (strain JCSC1435).